The following is a 145-amino-acid chain: uncharacterized protein (145 aa).

At Met-1 the chain carries N-acetylmethionine. Residues 15–41 (QLKNNSGGTNGDRNSGANNGGGENSAP) are disordered. A compositionally biased stretch (polar residues) spans 16-27 (LKNNSGGTNGDR). 2 positions are modified to phosphoserine: Ser-121 and Ser-126. The interval 125–145 (NSFDKQNAKNDDDEDDDDFFD) is disordered. A compositionally biased stretch (acidic residues) spans 135 to 145 (DDDEDDDDFFD).

The protein belongs to the PDCD5 family.

This is an uncharacterized protein from Saccharomyces cerevisiae (strain ATCC 204508 / S288c) (Baker's yeast).